The following is a 105-amino-acid chain: Cell division protein FtsB (105 aa).

The Cytoplasmic portion of the chain corresponds to 1 to 3 (MRI). The helical transmembrane segment at 4–21 (VIYSMLVLLIAIQYPLWL) threads the bilayer. The Periplasmic segment spans residues 22-105 (GKGGWLKVYE…DTAKASTVKQ (84 aa)). Positions 32 to 60 (MEKQVELQEAKNSLLALRNAKLEGDVKDL) form a coiled coil.

It belongs to the FtsB family. Part of a complex composed of FtsB, FtsL and FtsQ.

The protein resides in the cell inner membrane. Functionally, essential cell division protein. May link together the upstream cell division proteins, which are predominantly cytoplasmic, with the downstream cell division proteins, which are predominantly periplasmic. The protein is Cell division protein FtsB of Polynucleobacter asymbioticus (strain DSM 18221 / CIP 109841 / QLW-P1DMWA-1) (Polynucleobacter necessarius subsp. asymbioticus).